We begin with the raw amino-acid sequence, 147 residues long: Bis(5'-nucleosyl)-tetraphosphatase [asymmetrical] (147 aa).

A2 carries the N-acetylalanine modification. The region spanning 2 to 139 is the Nudix hydrolase domain; it reads ALRACGLIIF…EMKAALQEGH (138 aa). The short motif at 43–64 is the Nudix box element; it reads GHVEPGESDLETALRETQEEAG.

Belongs to the Nudix hydrolase family. A divalent metal cation is required as a cofactor.

The enzyme catalyses P(1),P(4)-bis(5'-guanosyl) tetraphosphate + H2O = GMP + GTP + 2 H(+). It carries out the reaction a 5'-end CoA-ribonucleoside in mRNA + H2O = a 5'-end phospho-adenosine-phospho-ribonucleoside in mRNA + (R)-4'-phosphopantetheine + 2 H(+). It catalyses the reaction a 5'-end FAD-phospho-ribonucleoside in mRNA + H2O = a 5'-end phospho-adenosine-phospho-ribonucleoside in mRNA + FMN + 2 H(+). In terms of biological role, catalyzes the asymmetric hydrolysis of diadenosine 5',5'''-P1,P4-tetraphosphate (Ap4A) to yield AMP and ATP. Exhibits decapping activity towards FAD-capped RNAs and dpCoA-capped RNAs in vitro. In Bos taurus (Bovine), this protein is Bis(5'-nucleosyl)-tetraphosphatase [asymmetrical] (NUDT2).